A 242-amino-acid polypeptide reads, in one-letter code: Carboxy-S-adenosyl-L-methionine synthase (242 aa).

Residues Tyr39, 64 to 66 (GCS), 89 to 90 (DN), 117 to 118 (DI), Asn132, and Arg199 each bind S-adenosyl-L-methionine.

It belongs to the class I-like SAM-binding methyltransferase superfamily. Cx-SAM synthase family. In terms of assembly, homodimer.

The catalysed reaction is prephenate + S-adenosyl-L-methionine = carboxy-S-adenosyl-L-methionine + 3-phenylpyruvate + H2O. Functionally, catalyzes the conversion of S-adenosyl-L-methionine (SAM) to carboxy-S-adenosyl-L-methionine (Cx-SAM). The polypeptide is Carboxy-S-adenosyl-L-methionine synthase (Psychromonas ingrahamii (strain DSM 17664 / CCUG 51855 / 37)).